A 108-amino-acid polypeptide reads, in one-letter code: Small proline-rich protein 5 (108 aa).

Residues 1 to 13 (MSQQKQKQCAPPQ) are compositionally biased toward low complexity. Disordered regions lie at residues 1 to 24 (MSQQ…QRCP) and 73 to 108 (PPPQ…SKQK). Composition is skewed to pro residues over residues 14–24 (QCCPPPQQRCP) and 73–100 (PPPQ…PPPQ).

Its function is as follows. Positively regulates keratinocyte differentiation by inducing genes associated with epidermal differentiation. This Homo sapiens (Human) protein is Small proline-rich protein 5.